The chain runs to 157 residues: ATP synthase subunit b (157 aa).

Residues 7-29 traverse the membrane as a helical segment; the sequence is LISQAIAFSLFILFTARFVWPYL.

Belongs to the ATPase B chain family. In terms of assembly, F-type ATPases have 2 components, F(1) - the catalytic core - and F(0) - the membrane proton channel. F(1) has five subunits: alpha(3), beta(3), gamma(1), delta(1), epsilon(1). F(0) has three main subunits: a(1), b(2) and c(10-14). The alpha and beta chains form an alternating ring which encloses part of the gamma chain. F(1) is attached to F(0) by a central stalk formed by the gamma and epsilon chains, while a peripheral stalk is formed by the delta and b chains.

It is found in the cell inner membrane. Functionally, f(1)F(0) ATP synthase produces ATP from ADP in the presence of a proton or sodium gradient. F-type ATPases consist of two structural domains, F(1) containing the extramembraneous catalytic core and F(0) containing the membrane proton channel, linked together by a central stalk and a peripheral stalk. During catalysis, ATP synthesis in the catalytic domain of F(1) is coupled via a rotary mechanism of the central stalk subunits to proton translocation. Component of the F(0) channel, it forms part of the peripheral stalk, linking F(1) to F(0). The protein is ATP synthase subunit b of Nitrosomonas europaea (strain ATCC 19718 / CIP 103999 / KCTC 2705 / NBRC 14298).